Consider the following 558-residue polypeptide: Nucleoprotein (558 aa).

Residues 54-237 (MRKERRDDKD…ITEQQSSINI (184 aa)) are binding site for the cap structure m7GTP. Residues aspartate 382 and glutamate 384 each contribute to the Mn(2+) site. Zn(2+)-binding residues include glutamate 392, cysteine 499, histidine 502, and cysteine 518. Aspartate 522 serves as a coordination point for Mn(2+).

Belongs to the arenaviridae nucleocapsid protein family. In terms of assembly, homomultimerizes to form the nucleocapsid. Binds to viral genomic RNA. Interacts with glycoprotein G2. Interacts with protein Z; this interaction probably directs the encapsidated genome to budding sites. Interacts with protein L; this interaction does not interfere with Z-L interaction. Interacts with host IKBKE (via Protein kinase domain); the interaction inhibits IKBKE kinase activity.

The protein localises to the virion. It is found in the host cytoplasm. Functionally, encapsidates the genome, protecting it from nucleases. The encapsidated genomic RNA is termed the nucleocapsid (NC). Serves as template for viral transcription and replication. The increased presence of protein N in host cell does not seem to trigger the switch from transcription to replication as observed in other negative strain RNA viruses. Through the interaction with host IKBKE, strongly inhibits the phosphorylation and nuclear translocation of host IRF3, a protein involved in interferon activation pathway, leading to the inhibition of interferon-beta and IRF3-dependent promoters activation. Also encodes a functional 3'-5' exoribonuclease that degrades preferentially dsRNA substrates and thereby participates in the suppression of interferon induction. The chain is Nucleoprotein from Lymphocytic choriomeningitis virus (strain WE) (LCMV).